Reading from the N-terminus, the 462-residue chain is Argininosuccinate lyase (462 aa).

The protein belongs to the lyase 1 family. Argininosuccinate lyase subfamily.

Its subcellular location is the cytoplasm. The enzyme catalyses 2-(N(omega)-L-arginino)succinate = fumarate + L-arginine. The protein operates within amino-acid biosynthesis; L-arginine biosynthesis; L-arginine from L-ornithine and carbamoyl phosphate: step 3/3. This chain is Argininosuccinate lyase, found in Exiguobacterium sp. (strain ATCC BAA-1283 / AT1b).